Here is a 175-residue protein sequence, read N- to C-terminus: Large ribosomal subunit protein uL18 (175 aa).

It belongs to the universal ribosomal protein uL18 family. Part of the 50S ribosomal subunit. Contacts the 5S and 23S rRNAs.

This is one of the proteins that bind and probably mediate the attachment of the 5S RNA into the large ribosomal subunit, where it forms part of the central protuberance. The chain is Large ribosomal subunit protein uL18 from Methanosphaerula palustris (strain ATCC BAA-1556 / DSM 19958 / E1-9c).